Consider the following 411-residue polypeptide: Copper resistance protein CRF1 (411 aa).

Positions 1 to 40 form a DNA-binding region, copper-fist; the sequence is MVVIEGIKYACERCIRGHRVSSCTHTQQPLIRIKPKGRPA. Residues Cys-11, Cys-14, Cys-23, and His-25 each coordinate Zn(2+). 4 stretches are compositionally biased toward low complexity: residues 115–190, 205–214, 227–241, and 350–370; these read QQQA…PHSP, SSSSLSSLHS, SHNS…ANSP, and SVAA…PPSS. Disordered stretches follow at residues 115-241 and 348-389; these read QQQA…ANSP and EMSV…VSPA.

It is found in the nucleus. Functionally, transcriptional regulator involved in resistance to high copper concentration. The polypeptide is Copper resistance protein CRF1 (CRF1) (Yarrowia lipolytica (strain CLIB 122 / E 150) (Yeast)).